The sequence spans 250 residues: 23S rRNA (guanosine-2'-O-)-methyltransferase RlmB (250 aa).

Residues Gly-198, Leu-218, and Leu-227 each coordinate S-adenosyl-L-methionine.

It belongs to the class IV-like SAM-binding methyltransferase superfamily. RNA methyltransferase TrmH family. RlmB subfamily.

It localises to the cytoplasm. It carries out the reaction guanosine(2251) in 23S rRNA + S-adenosyl-L-methionine = 2'-O-methylguanosine(2251) in 23S rRNA + S-adenosyl-L-homocysteine + H(+). Its function is as follows. Specifically methylates the ribose of guanosine 2251 in 23S rRNA. The polypeptide is 23S rRNA (guanosine-2'-O-)-methyltransferase RlmB (Pseudomonas syringae pv. tomato (strain ATCC BAA-871 / DC3000)).